A 286-amino-acid chain; its full sequence is Phosphatidylserine decarboxylase proenzyme (286 aa).

Catalysis depends on charge relay system; for autoendoproteolytic cleavage activity residues Asp90, His147, and Ser252. Ser252 (schiff-base intermediate with substrate; via pyruvic acid; for decarboxylase activity) is an active-site residue. At Ser252 the chain carries Pyruvic acid (Ser); by autocatalysis.

Belongs to the phosphatidylserine decarboxylase family. PSD-B subfamily. Prokaryotic type I sub-subfamily. As to quaternary structure, heterodimer of a large membrane-associated beta subunit and a small pyruvoyl-containing alpha subunit. Requires pyruvate as cofactor. In terms of processing, is synthesized initially as an inactive proenzyme. Formation of the active enzyme involves a self-maturation process in which the active site pyruvoyl group is generated from an internal serine residue via an autocatalytic post-translational modification. Two non-identical subunits are generated from the proenzyme in this reaction, and the pyruvate is formed at the N-terminus of the alpha chain, which is derived from the carboxyl end of the proenzyme. The autoendoproteolytic cleavage occurs by a canonical serine protease mechanism, in which the side chain hydroxyl group of the serine supplies its oxygen atom to form the C-terminus of the beta chain, while the remainder of the serine residue undergoes an oxidative deamination to produce ammonia and the pyruvoyl prosthetic group on the alpha chain. During this reaction, the Ser that is part of the protease active site of the proenzyme becomes the pyruvoyl prosthetic group, which constitutes an essential element of the active site of the mature decarboxylase.

The protein localises to the cell membrane. It carries out the reaction a 1,2-diacyl-sn-glycero-3-phospho-L-serine + H(+) = a 1,2-diacyl-sn-glycero-3-phosphoethanolamine + CO2. Its pathway is phospholipid metabolism; phosphatidylethanolamine biosynthesis; phosphatidylethanolamine from CDP-diacylglycerol: step 2/2. Its function is as follows. Catalyzes the formation of phosphatidylethanolamine (PtdEtn) from phosphatidylserine (PtdSer). The chain is Phosphatidylserine decarboxylase proenzyme from Pseudomonas fluorescens (strain SBW25).